We begin with the raw amino-acid sequence, 358 residues long: Arginine kinase (358 aa).

Residues 2-84 (SDADLFSKLD…LDEVIKDYHK (83 aa)) form the Phosphagen kinase N-terminal domain. 57–61 (GVGIY) provides a ligand contact to substrate. In terms of domain architecture, Phosphagen kinase C-terminal spans 112-350 (FIVSTRVRVG…EEILKREKEL (239 aa)). Residues 115 to 119 (STRVR) and His-178 each bind ATP. Glu-218 is a substrate binding site. Arg-222 contributes to the ATP binding site. Substrate is bound at residue Cys-265. Residues 274–278 (RASVH) and 303–308 (RGIHGE) each bind ATP. Residue Glu-308 participates in substrate binding.

The protein belongs to the ATP:guanido phosphotransferase family.

It catalyses the reaction L-arginine + ATP = N(omega)-phospho-L-arginine + ADP + H(+). The chain is Arginine kinase from Turbo cornutus (Horned turban).